The chain runs to 862 residues: Valine--tRNA ligase (862 aa).

The short motif at 43 to 53 is the 'HIGH' region element; the sequence is PTVSGALHVGH. The disordered stretch occupies residues 459 to 494; that stretch reads ERPILPDDAALPVDPSSDTPTGYHDSQRHQPGGFMA. A 'KMSKS' region motif is present at residues 574–578; that stretch reads KMSKS. K577 contributes to the ATP binding site.

It belongs to the class-I aminoacyl-tRNA synthetase family. ValS type 2 subfamily. Monomer.

It localises to the cytoplasm. It catalyses the reaction tRNA(Val) + L-valine + ATP = L-valyl-tRNA(Val) + AMP + diphosphate. Its function is as follows. Catalyzes the attachment of valine to tRNA(Val). As ValRS can inadvertently accommodate and process structurally similar amino acids such as threonine, to avoid such errors, it has a 'posttransfer' editing activity that hydrolyzes mischarged Thr-tRNA(Val) in a tRNA-dependent manner. The sequence is that of Valine--tRNA ligase from Salinispora arenicola (strain CNS-205).